The sequence spans 415 residues: Squalene synthase 11 (415 aa).

2 helical membrane-spanning segments follow: residues 281–301 (AIFRFCAIPQIMAIGTLALCF) and 392–412 (LIIILFIILAILYAYLSSNLP).

This sequence belongs to the phytoene/squalene synthase family. The cofactor is Mg(2+). Requires Mn(2+) as cofactor.

It is found in the endoplasmic reticulum membrane. The catalysed reaction is 2 (2E,6E)-farnesyl diphosphate + NADH + H(+) = squalene + 2 diphosphate + NAD(+). It catalyses the reaction 2 (2E,6E)-farnesyl diphosphate + NADPH + H(+) = squalene + 2 diphosphate + NADP(+). Its pathway is terpene metabolism; lanosterol biosynthesis; lanosterol from farnesyl diphosphate: step 1/3. Its function is as follows. Component of the triterpene saponins (e.g. ginsenosides or panaxosides) and phytosterols biosynthetic pathways. Catalyzes the biosynthesis of squalene. The polypeptide is Squalene synthase 11 (Panax ginseng (Korean ginseng)).